A 25-amino-acid chain; its full sequence is Bifunctional chitinase/lysozyme (25 aa).

It belongs to the glycosyl hydrolase 19 family. Chitinase class I subfamily. In terms of assembly, monomer.

The protein localises to the secreted. The protein resides in the extracellular space. The catalysed reaction is Random endo-hydrolysis of N-acetyl-beta-D-glucosaminide (1-&gt;4)-beta-linkages in chitin and chitodextrins.. It carries out the reaction Hydrolysis of (1-&gt;4)-beta-linkages between N-acetylmuramic acid and N-acetyl-D-glucosamine residues in a peptidoglycan and between N-acetyl-D-glucosamine residues in chitodextrins.. Its function is as follows. Bifunctional enzyme with lysozyme/chitinase activity. This is Bifunctional chitinase/lysozyme from Carica papaya (Papaya).